A 147-amino-acid polypeptide reads, in one-letter code: Lysozyme C-3 (147 aa).

An N-terminal signal peptide occupies residues 1–18 (MKALIILGFLFLSVAVQG). Residues 19 to 147 (KVFERCELAR…VSSYVQGCTL (129 aa)) form the C-type lysozyme domain. 4 disulfides stabilise this stretch: Cys24-Cys145, Cys48-Cys133, Cys83-Cys99, and Cys95-Cys113. Active-site residues include Glu53 and Asp71.

Belongs to the glycosyl hydrolase 22 family. As to quaternary structure, monomer. In terms of tissue distribution, stomach-specific.

The catalysed reaction is Hydrolysis of (1-&gt;4)-beta-linkages between N-acetylmuramic acid and N-acetyl-D-glucosamine residues in a peptidoglycan and between N-acetyl-D-glucosamine residues in chitodextrins.. Lysozymes have primarily a bacteriolytic function; those in tissues and body fluids are associated with the monocyte-macrophage system and enhance the activity of immunoagents. The protein is Lysozyme C-3 (LYZ3) of Bos taurus (Bovine).